We begin with the raw amino-acid sequence, 349 residues long: Pinopsin (349 aa).

A compositionally biased stretch (polar residues) spans 1 to 16 (MDPTNSPQEPPHTSTP). The interval 1 to 22 (MDPTNSPQEPPHTSTPGPFDGP) is disordered. The Extracellular portion of the chain corresponds to 1–32 (MDPTNSPQEPPHTSTPGPFDGPQWPHQAPRGM). A helical membrane pass occupies residues 33–57 (YLSVAVLMGIVVISASVVNGLVIVV). Over 58–69 (SIRYKKLRSPLN) the chain is Cytoplasmic. The chain crosses the membrane as a helical span at residues 70–94 (YILVNLAMADLLVTLCGSSVSFSNN). Residues 95-109 (INGFFVFGKRLCELE) are Extracellular-facing. C106 and C183 are joined by a disulfide. The helical transmembrane segment at 110 to 129 (GFMVSLTGIVGLWSLAILAL) threads the bilayer. Topologically, residues 130–148 (ERYVVVCRPLGDFRFQHRH) are cytoplasmic. Residues 149–172 (AVTGCAFTWVWSLLWTTPPLLGWS) form a helical membrane-spanning segment. At 173–196 (SYVPEGLRTSCGPNWYTGGSNNNS) the chain is on the extracellular side. Residue N194 is glycosylated (N-linked (GlcNAc...) asparagine). The chain crosses the membrane as a helical span at residues 197–224 (YILTLFVTCFVMPLSLILFSYANLLMTL). Residues 225 to 246 (RAAAAQQQESDTTQQAERQVTR) lie on the Cytoplasmic side of the membrane. A helical transmembrane segment spans residues 247–270 (MVVAMVMAFLICWLPYTTFALVVA). The Extracellular portion of the chain corresponds to 271–278 (TNKDIAIQ). A helical membrane pass occupies residues 279 to 303 (PALASLPSYFSKTATVYNPIIYVFM). Position 290 is an N6-(retinylidene)lysine (K290). The Cytoplasmic segment spans residues 304–349 (NKQFQSCLLKMLCCGHHPRGTGRTAPAAPASPTDGLRNKVTPSHPV). S-palmitoyl cysteine attachment occurs at residues C316 and C317. Positions 325-349 (GRTAPAAPASPTDGLRNKVTPSHPV) are disordered.

The protein belongs to the G-protein coupled receptor 1 family. Opsin subfamily. In terms of processing, phosphorylated on some or all of the serine and threonine residues present in the C-terminal region. Pineal gland.

The protein localises to the membrane. Produces a slow and prolonged phototransduction response consistent with the non-visual function of pineal photoreception. This chain is Pinopsin, found in Columba livia (Rock dove).